The following is a 129-amino-acid chain: Small ribosomal subunit protein bS6 (129 aa).

Residues 103-129 are disordered; sequence LKQKEERAERAPRREERAEAKPEAAAE. Residues 104 to 129 show a composition bias toward basic and acidic residues; it reads KQKEERAERAPRREERAEAKPEAAAE.

This sequence belongs to the bacterial ribosomal protein bS6 family.

Its function is as follows. Binds together with bS18 to 16S ribosomal RNA. In Vibrio campbellii (strain ATCC BAA-1116), this protein is Small ribosomal subunit protein bS6.